The following is a 71-amino-acid chain: Small ribosomal subunit protein bS21 (71 aa).

Basic residues predominate over residues 49–59 (AAAAVKRHAKK). Positions 49–71 (AAAAVKRHAKKVQREQRRSVRLY) are disordered. Positions 60–71 (VQREQRRSVRLY) are enriched in basic and acidic residues.

The protein belongs to the bacterial ribosomal protein bS21 family.

The sequence is that of Small ribosomal subunit protein bS21 from Stutzerimonas stutzeri (strain A1501) (Pseudomonas stutzeri).